The following is a 260-amino-acid chain: Peptidase inhibitor 15-A (260 aa).

An N-terminal signal peptide occupies residues 1 to 21 (MNENRLAIDILLLCISCGASA). A propeptide spanning residues 22–62 (LAGFSPTASSSLPATNLTDIGFAPPKYLTEAANIPKTRRKR) is cleaved from the precursor. N-linked (GlcNAc...) asparagine glycosylation is found at N37 and N126. The SCP domain occupies 73–213 (LDYHNKVRGK…KRATYLVCNY (141 aa)).

Belongs to the CRISP family.

It localises to the secreted. Functionally, serine protease inhibitor which displays weak inhibitory activity against trypsin. May play a role in facial patterning during embryonic development. The protein is Peptidase inhibitor 15-A (pi15a) of Danio rerio (Zebrafish).